The sequence spans 380 residues: Cytochrome b (380 aa).

The next 4 membrane-spanning stretches (helical) occupy residues 34–54, 78–99, 114–134, and 179–199; these read FGSL…LLAM, WLIR…FLHI, WNTG…GYVL, and FFAL…IHLT. Residues H84 and H98 each contribute to the heme b site. The heme b site is built by H183 and H197. Residue H202 participates in a ubiquinone binding. The next 4 membrane-spanning stretches (helical) occupy residues 227 to 247, 289 to 309, 321 to 341, and 348 to 368; these read LKDI…ALFS, LGGV…PFLH, LSQI…WIGS, and FIII…ILFP.

The protein belongs to the cytochrome b family. As to quaternary structure, the cytochrome bc1 complex contains 11 subunits: 3 respiratory subunits (MT-CYB, CYC1 and UQCRFS1), 2 core proteins (UQCRC1 and UQCRC2) and 6 low-molecular weight proteins (UQCRH/QCR6, UQCRB/QCR7, UQCRQ/QCR8, UQCR10/QCR9, UQCR11/QCR10 and a cleavage product of UQCRFS1). This cytochrome bc1 complex then forms a dimer. The cofactor is heme b.

The protein resides in the mitochondrion inner membrane. Component of the ubiquinol-cytochrome c reductase complex (complex III or cytochrome b-c1 complex) that is part of the mitochondrial respiratory chain. The b-c1 complex mediates electron transfer from ubiquinol to cytochrome c. Contributes to the generation of a proton gradient across the mitochondrial membrane that is then used for ATP synthesis. The protein is Cytochrome b (MT-CYB) of Polyplectron bicalcaratum (Grey peacock-pheasant).